The sequence spans 292 residues: MKLARLTPSHIPYYIALMRIDKPIGTLLLLWPTYWALWLANAGMPSLTNFIVFTLGVVIMRSAGCVINDFADRKIDGSVKRTMQRPLVSGQVSSGEAISLFILLITVAFLLVLMLSVNTILLSFGALALAFCYPFMKRYTQLPQVVLGAAFGWAIPMAFMASINALPIQAWLLFIANICWTVAYDTMYAMVDRDDDLKIGVKSTAILFGKYDRHIIGLLNLAFIALMLSIGALNNIGLSYWLGLSVAIVLLVYQQVLIQQRARTDCFKAFLNNHYVGLAFFIGLLFSYPVAF.

Transmembrane regions (helical) follow at residues 24–44 (IGTLLLLWPTYWALWLANAGM), 47–67 (LTNFIVFTLGVVIMRSAGCVI), 97–117 (AISLFILLITVAFLLVLMLSV), 119–139 (TILLSFGALALAFCYPFMKRY), 145–165 (VVLGAAFGWAIPMAFMASINA), 171–191 (WLLFIANICWTVAYDTMYAMV), 214–234 (HIIGLLNLAFIALMLSIGALN), 238–258 (LSYWLGLSVAIVLLVYQQVLI), and 270–290 (FLNNHYVGLAFFIGLLFSYPV).

It belongs to the UbiA prenyltransferase family. Mg(2+) is required as a cofactor.

Its subcellular location is the cell inner membrane. It carries out the reaction all-trans-octaprenyl diphosphate + 4-hydroxybenzoate = 4-hydroxy-3-(all-trans-octaprenyl)benzoate + diphosphate. The protein operates within cofactor biosynthesis; ubiquinone biosynthesis. Its function is as follows. Catalyzes the prenylation of para-hydroxybenzoate (PHB) with an all-trans polyprenyl group. Mediates the second step in the final reaction sequence of ubiquinone-8 (UQ-8) biosynthesis, which is the condensation of the polyisoprenoid side chain with PHB, generating the first membrane-bound Q intermediate 3-octaprenyl-4-hydroxybenzoate. In Pseudoalteromonas translucida (strain TAC 125), this protein is 4-hydroxybenzoate octaprenyltransferase.